A 206-amino-acid polypeptide reads, in one-letter code: MTKRTSAKYKIDRRMGENIWGRPKSPVNKREYGPGQHGQRRKNKLSDFGTQLRAKQKLKGYYGDLTEKQFRKIYAEAERVKGDTGEMLVGLLERRLDAIVYRAKFVPTVFAARQFVNHGHVTVNGQRVNIGSYRCKEGDVIQVRERSRQLAIVLEATQLAERDVPDYIEVDYSKMTATFVRTPSLGDVPYPVVMEPNLVVEFYAKN.

Residues 15-46 form a disordered region; it reads MGENIWGRPKSPVNKREYGPGQHGQRRKNKLS. The S4 RNA-binding domain occupies 94–157; it reads RRLDAIVYRA…RQLAIVLEAT (64 aa).

Belongs to the universal ribosomal protein uS4 family. As to quaternary structure, part of the 30S ribosomal subunit. Contacts protein S5. The interaction surface between S4 and S5 is involved in control of translational fidelity.

One of the primary rRNA binding proteins, it binds directly to 16S rRNA where it nucleates assembly of the body of the 30S subunit. Its function is as follows. With S5 and S12 plays an important role in translational accuracy. This Cereibacter sphaeroides (strain ATCC 17025 / ATH 2.4.3) (Rhodobacter sphaeroides) protein is Small ribosomal subunit protein uS4.